A 61-amino-acid chain; its full sequence is Putative neurotoxin-D (61 aa).

Positions 1 to 19 (MRTTVAILLVLFALSAILA) are cleaved as a signal peptide. 3 cysteine pairs are disulfide-bonded: cysteine 31-cysteine 51, cysteine 37-cysteine 56, and cysteine 39-cysteine 58.

Expressed by the venom gland.

It is found in the secreted. In Lychas mucronatus (Chinese swimming scorpion), this protein is Putative neurotoxin-D.